We begin with the raw amino-acid sequence, 226 residues long: Cytidylate kinase (226 aa).

An ATP-binding site is contributed by 11 to 19; that stretch reads GPASAGKST.

The protein belongs to the cytidylate kinase family. Type 1 subfamily.

The protein resides in the cytoplasm. The catalysed reaction is CMP + ATP = CDP + ADP. It carries out the reaction dCMP + ATP = dCDP + ADP. In Limosilactobacillus fermentum (strain NBRC 3956 / LMG 18251) (Lactobacillus fermentum), this protein is Cytidylate kinase.